We begin with the raw amino-acid sequence, 256 residues long: 3-isopropylmalate dehydratase small subunit 2 (256 aa).

Residues 1-59 (MAYSLPTFPQALPCSSTKTSSSLATFRSPFLRFNGSTSLIPSSISITSRGTSSPTIIPR) constitute a chloroplast transit peptide.

This sequence belongs to the LeuD family. As to quaternary structure, heterodimer of the large LEUC/IIL1 subunit and the small LEUD (SSU1, SSU2 or SSU3) subunits. In terms of tissue distribution, expressed in vascular bundles of roots, cotyledons and rosette leaves. Expressed in stem vascular bundles which branche off into lateral inflorescences. Expressed in connective tissues in anthers. In young seedlings, expressed in cotyledon epidermal cells and vasculare bundles. In hypocotyls, expressed in parenchyma cells surrounding the vasculature and further peripheral cells. In seedling roots, expressed in cells along the vasculature. In roots of adult plants, expressed in cells closely associated with the stele. In flowering stalks, expressed in parenchyma cells associated with the phloem or the xylem. Expressed in the vasculature of sepals and petals.

It localises to the plastid. Its subcellular location is the chloroplast stroma. The enzyme catalyses (2R,3S)-3-isopropylmalate = (2S)-2-isopropylmalate. It catalyses the reaction a 2-(omega-methylsulfanyl)alkylmalate = a 2-(omega-methylsulfanyl)alkylmaleate + H2O. It carries out the reaction 2-(3-methylsulfanyl)propylmalate = 2-(2-methylsulfanyl)propylmaleate + H2O. The catalysed reaction is a 3-(omega-methylsulfanyl)alkylmalate = a 2-(omega-methylsulfanyl)alkylmaleate + H2O. The enzyme catalyses 2-(2-methylsulfanyl)ethylmalate = 2-(2-methylsulfanyl)ethylmaleate + H2O. It catalyses the reaction 3-(2-methylsulfanyl)ethylmalate = 2-(2-methylsulfanyl)ethylmaleate + H2O. It carries out the reaction 3-(3-methylsulfanyl)propylmalate = 2-(2-methylsulfanyl)propylmaleate + H2O. The protein operates within amino-acid biosynthesis; L-leucine biosynthesis; L-leucine from 3-methyl-2-oxobutanoate: step 2/4. In terms of biological role, catalyzes the isomerization between 2-isopropylmalate and 3-isopropylmalate, via the formation of 2-isopropylmaleate. Functions redundantly with LEUD2 in the methionine chain elongation pathway of aliphatic glucosinolate formation. The sequence is that of 3-isopropylmalate dehydratase small subunit 2 from Arabidopsis thaliana (Mouse-ear cress).